The primary structure comprises 642 residues: 1,4-alpha-glucan branching enzyme GlgB (642 aa).

D304 serves as the catalytic Nucleophile. E355 (proton donor) is an active-site residue.

This sequence belongs to the glycosyl hydrolase 13 family. GlgB subfamily. As to quaternary structure, monomer.

It carries out the reaction Transfers a segment of a (1-&gt;4)-alpha-D-glucan chain to a primary hydroxy group in a similar glucan chain.. It functions in the pathway glycan biosynthesis; glycogen biosynthesis. Functionally, catalyzes the formation of the alpha-1,6-glucosidic linkages in glycogen by scission of a 1,4-alpha-linked oligosaccharide from growing alpha-1,4-glucan chains and the subsequent attachment of the oligosaccharide to the alpha-1,6 position. The polypeptide is 1,4-alpha-glucan branching enzyme GlgB (Streptococcus pneumoniae serotype 2 (strain D39 / NCTC 7466)).